Consider the following 214-residue polypeptide: Serine protease inhibitor 2.1 (214 aa).

The protein belongs to the serpin family.

This Rattus norvegicus (Rat) protein is Serine protease inhibitor 2.1.